Here is a 93-residue protein sequence, read N- to C-terminus: Large ribosomal subunit protein uL23c (93 aa).

This sequence belongs to the universal ribosomal protein uL23 family. Part of the 50S ribosomal subunit.

The protein localises to the plastid. Its subcellular location is the chloroplast. Functionally, binds to 23S rRNA. This is Large ribosomal subunit protein uL23c (rpl23) from Fragaria ananassa (Strawberry).